The chain runs to 319 residues: 1-aminocyclopropane-1-carboxylate oxidase (319 aa).

Residues 152 to 253 (GPNFGSKVSN…RMSLASFYNP (102 aa)) form the Fe2OG dioxygenase domain. Residues H177, D179, and H234 each contribute to the Fe cation site.

The protein belongs to the iron/ascorbate-dependent oxidoreductase family. Fe cation is required as a cofactor.

It catalyses the reaction 1-aminocyclopropane-1-carboxylate + L-ascorbate + O2 = ethene + L-dehydroascorbate + hydrogen cyanide + CO2 + 2 H2O. The protein operates within alkene biosynthesis; ethylene biosynthesis via S-adenosyl-L-methionine; ethylene from S-adenosyl-L-methionine: step 2/2. The polypeptide is 1-aminocyclopropane-1-carboxylate oxidase (ACO) (Nicotiana tabacum (Common tobacco)).